Here is a 132-residue protein sequence, read N- to C-terminus: Small ribosomal subunit protein uS8 (132 aa).

Belongs to the universal ribosomal protein uS8 family. Part of the 30S ribosomal subunit. Contacts proteins S5 and S12.

One of the primary rRNA binding proteins, it binds directly to 16S rRNA central domain where it helps coordinate assembly of the platform of the 30S subunit. The sequence is that of Small ribosomal subunit protein uS8 from Borrelia duttonii (strain Ly).